The sequence spans 1316 residues: DNA-directed RNA polymerase subunit beta' (1316 aa).

Zn(2+) contacts are provided by C60, C62, C75, and C78. The interval 183–209 (ELEEEGAKSDVRRKVRDGGEREMRQLR) is disordered. The Mg(2+) site is built by D535, D537, and D539. Residues C890, C966, C973, and C976 each coordinate Zn(2+).

The protein belongs to the RNA polymerase beta' chain family. In terms of assembly, the RNAP catalytic core consists of 2 alpha, 1 beta, 1 beta' and 1 omega subunit. When a sigma factor is associated with the core the holoenzyme is formed, which can initiate transcription. Mg(2+) serves as cofactor. Zn(2+) is required as a cofactor.

It carries out the reaction RNA(n) + a ribonucleoside 5'-triphosphate = RNA(n+1) + diphosphate. Functionally, DNA-dependent RNA polymerase catalyzes the transcription of DNA into RNA using the four ribonucleoside triphosphates as substrates. The sequence is that of DNA-directed RNA polymerase subunit beta' from Mycolicibacterium gilvum (strain PYR-GCK) (Mycobacterium gilvum (strain PYR-GCK)).